Here is a 201-residue protein sequence, read N- to C-terminus: Protease (201 aa).

Residues His55, Asp72, and Cys122 contribute to the active site.

This sequence belongs to the peptidase C5 family. As to quaternary structure, interacts with protease cofactor pVI-C; this interaction is necessary for protease activation.

The protein localises to the virion. The protein resides in the host nucleus. The catalysed reaction is Cleaves proteins of the adenovirus and its host cell at two consensus sites: -Yaa-Xaa-Gly-Gly-|-Xaa- and -Yaa-Xaa-Gly-Xaa-|-Gly- (in which Yaa is Met, Ile or Leu, and Xaa is any amino acid).. With respect to regulation, requires DNA and protease cofactor for maximal activation. Inside nascent virions, becomes partially activated by binding to the viral DNA, allowing it to cleave the cofactor that binds to the protease and fully activates it. Actin, like the viral protease cofactor, seems to act as a cofactor in the cleavage of cytokeratin 18 and of actin itself. Cleaves viral precursor proteins (pTP, pIIIa, pVI, pVII, pVIII, and pX) inside newly assembled particles giving rise to mature virions. Protease complexed to its cofactor slides along the viral DNA to specifically locate and cleave the viral precursors. Mature virions have a weakened organization compared to the unmature virions, thereby facilitating subsequent uncoating. Without maturation, the particle lacks infectivity and is unable to uncoat. Late in adenovirus infection, in the cytoplasm, may participate in the cytoskeleton destruction. Cleaves host cell cytoskeletal keratins K7 and K18. In Ovis aries (Sheep), this protein is Protease.